Reading from the N-terminus, the 714-residue chain is Neutral ceramidase A (714 aa).

A signal peptide spans Met-1–Ala-23. Asn-218 and Asn-246 each carry an N-linked (GlcNAc...) asparagine glycan. Ser-293 (nucleophile) is an active-site residue. N-linked (GlcNAc...) asparagine glycans are attached at residues Asn-353, Asn-373, Asn-416, Asn-571, Asn-610, and Asn-700.

It belongs to the neutral ceramidase family.

The protein resides in the secreted. It catalyses the reaction an N-acylsphing-4-enine + H2O = sphing-4-enine + a fatty acid. Functionally, hydrolyzes the sphingolipid ceramide into sphingosine and free fatty acid at an optimal pH of 3.0. Has no activity toward glycosphingolipids, such as GalCer and Galbeta1-3GalNAcbeta1-4(NeuAcalpha2-3)Galbeta1-4Glcbeta1-1'Cer or sphingomyelin. This Dictyostelium discoideum (Social amoeba) protein is Neutral ceramidase A (dcd2A).